Here is a 454-residue protein sequence, read N- to C-terminus: Putative serine carboxypeptidase-like 23 (454 aa).

An N-terminal signal peptide occupies residues 1-22 (MARIHLIIILLVISSTSSSSSS). 3 N-linked (GlcNAc...) asparagine glycosylation sites follow: asparagine 52, asparagine 102, and asparagine 136. Disulfide bonds link cysteine 85–cysteine 338, cysteine 247–cysteine 258, and cysteine 282–cysteine 306. Serine 178 is an active-site residue. Residues asparagine 287 and asparagine 327 are each glycosylated (N-linked (GlcNAc...) asparagine). Catalysis depends on residues aspartate 375 and histidine 427.

Belongs to the peptidase S10 family. Expression not detected.

The protein resides in the secreted. Probable carboxypeptidase. This Arabidopsis thaliana (Mouse-ear cress) protein is Putative serine carboxypeptidase-like 23 (SCPL23).